The sequence spans 299 residues: Adenylate kinase (299 aa).

The disordered stretch occupies residues 1–30 (MATTTTRGARDSPFPAPSEGEIKKELNMKG). 85–90 (GAGKGT) provides a ligand contact to ATP. Residues 107–136 (ATGDMLREQVSKQTELGKMAKKIMDQGGLV) form an NMP region. Residues threonine 108, arginine 113, 134 to 136 (GLV), 163 to 166 (GFPR), and glutamine 170 each bind AMP. Residues 204–241 (GRLVHPASGRSYHKEFSPPKKPMTDDVTGEPLIQRSDD) are LID. ATP contacts are provided by residues arginine 205 and 214-215 (SY). The interval 212–237 (GRSYHKEFSPPKKPMTDDVTGEPLIQ) is disordered. Over residues 215-227 (YHKEFSPPKKPMT) the composition is skewed to basic and acidic residues. 2 residues coordinate AMP: arginine 238 and arginine 249. Glutamine 277 contributes to the ATP binding site.

This sequence belongs to the adenylate kinase family. AK2 subfamily. Monomer.

The protein resides in the cytoplasm. It is found in the cytosol. The protein localises to the mitochondrion intermembrane space. It carries out the reaction AMP + ATP = 2 ADP. Functionally, catalyzes the reversible transfer of the terminal phosphate group between ATP and AMP. Plays an important role in cellular energy homeostasis and in adenine nucleotide metabolism. Adenylate kinase activity is critical for regulation of the phosphate utilization and the AMP de novo biosynthesis pathways. This is Adenylate kinase from Mycosarcoma maydis (Corn smut fungus).